The chain runs to 196 residues: Probable malonic semialdehyde reductase RutE (196 aa).

Belongs to the nitroreductase family. HadB/RutE subfamily. The cofactor is FMN.

It catalyses the reaction 3-hydroxypropanoate + NADP(+) = 3-oxopropanoate + NADPH + H(+). May reduce toxic product malonic semialdehyde to 3-hydroxypropionic acid, which is excreted. The protein is Probable malonic semialdehyde reductase RutE of Escherichia coli O157:H7.